The sequence spans 76 residues: Small proline-rich protein 2F (76 aa).

3 tandem repeats follow at residues 21–29 (PKCPEPCSP), 30–38 (SVCPEPCPP), and 39–47 (PKCPEPCPE). The tract at residues 21-47 (PKCPEPCSPSVCPEPCPPPKCPEPCPE) is 3 X 9 AA approximate tandem repeats. The interval 53 to 76 (SFQQKCPPVQPPPPCQQKCPPKSK) is disordered.

It belongs to the cornifin (SPRR) family. Expressed in uterus.

The protein resides in the cytoplasm. Cross-linked envelope protein of keratinocytes. It is a keratinocyte protein that first appears in the cell cytosol, but ultimately becomes cross-linked to membrane proteins by transglutaminase. All that results in the formation of an insoluble envelope beneath the plasma membrane. The protein is Small proline-rich protein 2F (Sprr2f) of Mus musculus (Mouse).